Here is a 133-residue protein sequence, read N- to C-terminus: Histone H2A.1 (133 aa).

The disordered stretch occupies residues 1–23; the sequence is MSTTGKGGKAKGKTASSKQVSRS. Residue S2 is modified to N-acetylserine. K6, K9, K11, K13, and K18 each carry N6-acetyllysine. S123 is subject to Phosphoserine. K124 participates in a covalent cross-link: Glycyl lysine isopeptide (Lys-Gly) (interchain with G-Cter in ubiquitin).

Belongs to the histone H2A family. In terms of assembly, the nucleosome is a histone octamer containing two molecules each of H2A, H2B, H3 and H4 assembled in one H3-H4 heterotetramer and two H2A-H2B heterodimers. The octamer wraps approximately 147 bp of DNA. In terms of processing, monoubiquitination of Lys-124 gives a specific tag for epigenetic transcriptional repression. Post-translationally, acetylation occurs almost exclusively in the MAC.

The protein localises to the nucleus. It is found in the chromosome. Its function is as follows. Core component of nucleosome. Nucleosomes wrap and compact DNA into chromatin, limiting DNA accessibility to the cellular machineries which require DNA as a template. Histones thereby play a central role in transcription regulation, DNA repair, DNA replication and chromosomal stability. DNA accessibility is regulated via a complex set of post-translational modifications of histones, also called histone code, and nucleosome remodeling. The chain is Histone H2A.1 (HTA2) from Tetrahymena thermophila (strain SB210).